A 319-amino-acid polypeptide reads, in one-letter code: Type II methyltransferase M.RsrI (319 aa).

Residues 1 to 10 (MANRSHHNAG) show a composition bias toward basic residues. The interval 1–32 (MANRSHHNAGHRAMNALRKSGQKHSSESQLGS) is disordered.

It belongs to the N(4)/N(6)-methyltransferase family.

It carries out the reaction a 2'-deoxyadenosine in DNA + S-adenosyl-L-methionine = an N(6)-methyl-2'-deoxyadenosine in DNA + S-adenosyl-L-homocysteine + H(+). Its activity is regulated as follows. Strongly inhibited by N-ethylmaleimide, inactivated by MgCl(2) or MgSO(4). Its function is as follows. A beta subtype methylase, recognizes the double-stranded sequence 5'-GAATTC-3', methylates A-3 on both strands, and protects the DNA from cleavage by the RsrI endonuclease. The protein is Type II methyltransferase M.RsrI of Cereibacter sphaeroides (Rhodobacter sphaeroides).